A 548-amino-acid chain; its full sequence is Glucose-6-phosphate isomerase 1 (548 aa).

The Proton donor role is filled by glutamate 353. Active-site residues include histidine 384 and lysine 495.

This sequence belongs to the GPI family.

The protein resides in the cytoplasm. The catalysed reaction is alpha-D-glucose 6-phosphate = beta-D-fructose 6-phosphate. It participates in carbohydrate biosynthesis; gluconeogenesis. Its pathway is carbohydrate degradation; glycolysis; D-glyceraldehyde 3-phosphate and glycerone phosphate from D-glucose: step 2/4. In terms of biological role, catalyzes the reversible isomerization of glucose-6-phosphate to fructose-6-phosphate. The polypeptide is Glucose-6-phosphate isomerase 1 (Chromohalobacter salexigens (strain ATCC BAA-138 / DSM 3043 / CIP 106854 / NCIMB 13768 / 1H11)).